The chain runs to 147 residues: uncharacterized protein (147 aa).

The disordered stretch occupies residues 23–48 (EEVSQPEPNTANDSSTEYKGKSKDDF). Residues 28 to 37 (PEPNTANDSS) show a composition bias toward polar residues. The span at 38–48 (TEYKGKSKDDF) shows a compositional bias: basic and acidic residues. The helical transmembrane segment at 85–105 (LMFCIIACSFICAIQFLFFII) threads the bilayer.

The protein localises to the membrane. This is an uncharacterized protein from Saccharomyces cerevisiae (strain ATCC 204508 / S288c) (Baker's yeast).